A 425-amino-acid chain; its full sequence is Serine--tRNA ligase (425 aa).

230 to 232 (TAE) provides a ligand contact to L-serine. Position 261 to 263 (261 to 263 (RSE)) interacts with ATP. Glu284 serves as a coordination point for L-serine. 348-351 (EISS) is an ATP binding site. An L-serine-binding site is contributed by Ser384.

It belongs to the class-II aminoacyl-tRNA synthetase family. Type-1 seryl-tRNA synthetase subfamily. As to quaternary structure, homodimer. The tRNA molecule binds across the dimer.

Its subcellular location is the cytoplasm. It catalyses the reaction tRNA(Ser) + L-serine + ATP = L-seryl-tRNA(Ser) + AMP + diphosphate + H(+). It carries out the reaction tRNA(Sec) + L-serine + ATP = L-seryl-tRNA(Sec) + AMP + diphosphate + H(+). It functions in the pathway aminoacyl-tRNA biosynthesis; selenocysteinyl-tRNA(Sec) biosynthesis; L-seryl-tRNA(Sec) from L-serine and tRNA(Sec): step 1/1. Functionally, catalyzes the attachment of serine to tRNA(Ser). Is also able to aminoacylate tRNA(Sec) with serine, to form the misacylated tRNA L-seryl-tRNA(Sec), which will be further converted into selenocysteinyl-tRNA(Sec). In Streptococcus thermophilus (strain ATCC BAA-491 / LMD-9), this protein is Serine--tRNA ligase.